We begin with the raw amino-acid sequence, 137 residues long: NADPH-dependent 7-cyano-7-deazaguanine reductase (137 aa).

Cys50 functions as the Thioimide intermediate in the catalytic mechanism. The active-site Proton donor is the Asp57. Substrate-binding positions include 72-74 (VEL) and 91-92 (HE).

It belongs to the GTP cyclohydrolase I family. QueF type 1 subfamily.

The protein resides in the cytoplasm. It catalyses the reaction 7-aminomethyl-7-carbaguanine + 2 NADP(+) = 7-cyano-7-deazaguanine + 2 NADPH + 3 H(+). It participates in tRNA modification; tRNA-queuosine biosynthesis. Functionally, catalyzes the NADPH-dependent reduction of 7-cyano-7-deazaguanine (preQ0) to 7-aminomethyl-7-deazaguanine (preQ1). This chain is NADPH-dependent 7-cyano-7-deazaguanine reductase, found in Synechococcus sp. (strain CC9902).